The following is a 358-amino-acid chain: Peroxidase 12 (358 aa).

An N-terminal signal peptide occupies residues 1–31; it reads MTKAYSTRVLTFLILISLMAVTLNLFPTVEA. 4 disulfides stabilise this stretch: Cys-53-Cys-134, Cys-86-Cys-91, Cys-140-Cys-335, and Cys-220-Cys-247. His-84 serves as the catalytic Proton acceptor. Ca(2+) is bound by residues Asp-85, Val-88, Gly-90, Glu-92, and Ser-94. Substrate is bound at residue Pro-183. 2 N-linked (GlcNAc...) asparagine glycosylation sites follow: Asn-188 and Asn-202. His-213 serves as a coordination point for heme b. Position 214 (Thr-214) interacts with Ca(2+). N-linked (GlcNAc...) asparagine glycosylation is present at Asn-251. Ca(2+)-binding residues include Asp-259, Ser-262, and Asp-267. Asn-334 carries N-linked (GlcNAc...) asparagine glycosylation.

The protein belongs to the peroxidase family. Classical plant (class III) peroxidase subfamily. The cofactor is heme b. Requires Ca(2+) as cofactor. In terms of tissue distribution, expressed in roots and leaves.

It is found in the secreted. Its subcellular location is the vacuole. The enzyme catalyses 2 a phenolic donor + H2O2 = 2 a phenolic radical donor + 2 H2O. Its function is as follows. Removal of H(2)O(2), oxidation of toxic reductants, biosynthesis and degradation of lignin, suberization, auxin catabolism, response to environmental stresses such as wounding, pathogen attack and oxidative stress. These functions might be dependent on each isozyme/isoform in each plant tissue. In terms of biological role, exhibits a Ca(2+)-pectate binding affinity which could be interpreted in vivo as a specificity to interact with the pectic structure of the cell wall. This chain is Peroxidase 12 (PER12), found in Arabidopsis thaliana (Mouse-ear cress).